A 1404-amino-acid polypeptide reads, in one-letter code: DNA-directed RNA polymerase subunit beta' (1404 aa).

Residues cysteine 70, cysteine 72, cysteine 85, and cysteine 88 each coordinate Zn(2+). Residues aspartate 460, aspartate 462, and aspartate 464 each coordinate Mg(2+). Zn(2+) is bound by residues cysteine 814, cysteine 888, cysteine 895, and cysteine 898.

The protein belongs to the RNA polymerase beta' chain family. As to quaternary structure, the RNAP catalytic core consists of 2 alpha, 1 beta, 1 beta' and 1 omega subunit. When a sigma factor is associated with the core the holoenzyme is formed, which can initiate transcription. The cofactor is Mg(2+). It depends on Zn(2+) as a cofactor.

The catalysed reaction is RNA(n) + a ribonucleoside 5'-triphosphate = RNA(n+1) + diphosphate. Its function is as follows. DNA-dependent RNA polymerase catalyzes the transcription of DNA into RNA using the four ribonucleoside triphosphates as substrates. In Shewanella loihica (strain ATCC BAA-1088 / PV-4), this protein is DNA-directed RNA polymerase subunit beta'.